A 65-amino-acid chain; its full sequence is Large ribosomal subunit protein bL35 (65 aa).

This sequence belongs to the bacterial ribosomal protein bL35 family.

The sequence is that of Large ribosomal subunit protein bL35 from Prochlorococcus marinus (strain MIT 9215).